The following is a 464-amino-acid chain: L-cystine uptake protein TcyP (464 aa).

10 helical membrane-spanning segments follow: residues 3–23, 34–54, 73–93, 107–127, 184–204, 225–245, 263–283, 347–367, 371–391, and 395–415; these read TLLVGINVAVMLILVGVLYYM, VFTALGVGIIFGLILQFIYEP, YVKLLQMIVMPLILVSIISAF, GLIIGILILTTGIAAAVGIAA, PTSTISVVIFAAFIGIAFIGV, IVMRMVTLILRLTPYGVLALM, FVLASYVALIVMFVIHLLLIA, AGIYPAMLAMMVAPTVGIDPL, FILTLIAVVAISSFGVAGVGG, and FAALIVLSTMNLPIGIVALVI.

It belongs to the dicarboxylate/amino acid:cation symporter (DAACS) (TC 2.A.23) family.

It is found in the membrane. Functionally, mediates uptake of L-cystine, the oxidized form of L-cysteine. In Bacillus cereus (strain ATCC 10987 / NRS 248), this protein is L-cystine uptake protein TcyP.